Reading from the N-terminus, the 427-residue chain is Clusterin-associated protein 1 homolog (427 aa).

The stretch at 202–307 (LLNNVSSDEA…LKEEEKRLMR (106 aa)) forms a coiled coil. Over residues 300-313 (EEEKRLMRSGVARD) the composition is skewed to basic and acidic residues. A disordered region spans residues 300–427 (EEEKRLMRSG…QILEESDNDF (128 aa)). Composition is skewed to acidic residues over residues 314–332 (EDSDVDIPEDEGSDSDIDD) and 363–400 (SEETEDSEIDVDDDDEDDDEDGEEDEEENEDLDEDNDS).

It belongs to the CLUAP1 family.

It localises to the nucleus. The protein localises to the cell projection. Its subcellular location is the cilium. In terms of biological role, required for cilia biogenesis and maintenance in the kidney, the lateral line organ and eye. Appears to function within the multiple intraflagellar transport complex B (IFT-B). This chain is Clusterin-associated protein 1 homolog (cluap1), found in Danio rerio (Zebrafish).